Consider the following 449-residue polypeptide: Tubulin alpha-1 chain (449 aa).

GTP-binding residues include glutamine 11, glutamate 71, serine 140, glycine 144, threonine 145, threonine 179, asparagine 206, and asparagine 228. Glutamate 71 contacts Mg(2+). Residue glutamate 254 is part of the active site.

Belongs to the tubulin family. Dimer of alpha and beta chains. A typical microtubule is a hollow water-filled tube with an outer diameter of 25 nm and an inner diameter of 15 nM. Alpha-beta heterodimers associate head-to-tail to form protofilaments running lengthwise along the microtubule wall with the beta-tubulin subunit facing the microtubule plus end conferring a structural polarity. Microtubules usually have 13 protofilaments but different protofilament numbers can be found in some organisms and specialized cells. It depends on Mg(2+) as a cofactor.

It is found in the cytoplasm. Its subcellular location is the cytoskeleton. It carries out the reaction GTP + H2O = GDP + phosphate + H(+). Tubulin is the major constituent of microtubules, a cylinder consisting of laterally associated linear protofilaments composed of alpha- and beta-tubulin heterodimers. Microtubules grow by the addition of GTP-tubulin dimers to the microtubule end, where a stabilizing cap forms. Below the cap, tubulin dimers are in GDP-bound state, owing to GTPase activity of alpha-tubulin. The sequence is that of Tubulin alpha-1 chain (tubA) from Emericella nidulans (strain FGSC A4 / ATCC 38163 / CBS 112.46 / NRRL 194 / M139) (Aspergillus nidulans).